The sequence spans 1054 residues: Translation initiation factor IF-2 (1054 aa).

2 disordered regions span residues 48-390 (RSKL…LDLD) and 409-458 (LARP…GTEP). Pro residues predominate over residues 65–76 (KPPSESLPPEPP). The span at 160-169 (SEATQKPETV) shows a compositional bias: polar residues. Residues 179-193 (SESAAAKASGSEPSP) are compositionally biased toward low complexity. Pro residues-rich tracts occupy residues 221-235 (PQKA…PSEA) and 304-316 (PTRP…PPEP). Positions 365–378 (RAARVQAKRKRSRR) are enriched in basic residues. Over residues 421-437 (PPAATAAPPARPRPAAR) the composition is skewed to low complexity. In terms of domain architecture, tr-type G spans 545–718 (SRPPVVTIMG…LLVADVAELQ (174 aa)). The interval 554 to 561 (GHVDHGKT) is G1. A GTP-binding site is contributed by 554 to 561 (GHVDHGKT). Residues 579–583 (GITQR) form a G2 region. The interval 604 to 607 (DTPG) is G3. GTP is bound by residues 604 to 608 (DTPGH) and 658 to 661 (NKID). Residues 658–661 (NKID) are G4. Positions 694 to 696 (SAL) are G5.

The protein belongs to the TRAFAC class translation factor GTPase superfamily. Classic translation factor GTPase family. IF-2 subfamily.

It localises to the cytoplasm. In terms of biological role, one of the essential components for the initiation of protein synthesis. Protects formylmethionyl-tRNA from spontaneous hydrolysis and promotes its binding to the 30S ribosomal subunits. Also involved in the hydrolysis of GTP during the formation of the 70S ribosomal complex. The polypeptide is Translation initiation factor IF-2 (Synechococcus sp. (strain JA-2-3B'a(2-13)) (Cyanobacteria bacterium Yellowstone B-Prime)).